Here is a 443-residue protein sequence, read N- to C-terminus: Thymidine phosphorylase (443 aa).

The protein belongs to the thymidine/pyrimidine-nucleoside phosphorylase family. As to quaternary structure, homodimer.

It carries out the reaction thymidine + phosphate = 2-deoxy-alpha-D-ribose 1-phosphate + thymine. The protein operates within pyrimidine metabolism; dTMP biosynthesis via salvage pathway; dTMP from thymine: step 1/2. The enzymes which catalyze the reversible phosphorolysis of pyrimidine nucleosides are involved in the degradation of these compounds and in their utilization as carbon and energy sources, or in the rescue of pyrimidine bases for nucleotide synthesis. In Shewanella piezotolerans (strain WP3 / JCM 13877), this protein is Thymidine phosphorylase.